The sequence spans 208 residues: Uracil phosphoribosyltransferase (208 aa).

5-phospho-alpha-D-ribose 1-diphosphate contacts are provided by residues arginine 78, arginine 103, and 130 to 138; that span reads DPMLATGGS. Uracil is bound by residues isoleucine 193 and 198-200; that span reads GDA. Aspartate 199 is a 5-phospho-alpha-D-ribose 1-diphosphate binding site.

The protein belongs to the UPRTase family. It depends on Mg(2+) as a cofactor.

The enzyme catalyses UMP + diphosphate = 5-phospho-alpha-D-ribose 1-diphosphate + uracil. Its pathway is pyrimidine metabolism; UMP biosynthesis via salvage pathway; UMP from uracil: step 1/1. With respect to regulation, allosterically activated by GTP. Catalyzes the conversion of uracil and 5-phospho-alpha-D-ribose 1-diphosphate (PRPP) to UMP and diphosphate. In Proteus mirabilis (strain HI4320), this protein is Uracil phosphoribosyltransferase.